The chain runs to 352 residues: Molybdenum import ATP-binding protein ModC (352 aa).

One can recognise an ABC transporter domain in the interval M1–E229. G31–T38 is an ATP binding site. One can recognise a Mop domain in the interval Q289–A352.

The protein belongs to the ABC transporter superfamily. Molybdate importer (TC 3.A.1.8) family. In terms of assembly, the complex is composed of two ATP-binding proteins (ModC), two transmembrane proteins (ModB) and a solute-binding protein (ModA).

The protein resides in the cell inner membrane. The catalysed reaction is molybdate(out) + ATP + H2O = molybdate(in) + ADP + phosphate + H(+). Part of the ABC transporter complex ModABC involved in molybdenum import. Responsible for energy coupling to the transport system. This is Molybdenum import ATP-binding protein ModC from Escherichia coli O6:H1 (strain CFT073 / ATCC 700928 / UPEC).